We begin with the raw amino-acid sequence, 392 residues long: Erythronate-4-phosphate dehydrogenase (392 aa).

Substrate-binding residues include Ser-48 and Thr-69. NAD(+) is bound at residue Asp-149. Arg-215 is an active-site residue. Asp-239 provides a ligand contact to NAD(+). Glu-244 is a catalytic residue. The Proton donor role is filled by His-261. Gly-264 contacts NAD(+). Residue Tyr-265 coordinates substrate.

Belongs to the D-isomer specific 2-hydroxyacid dehydrogenase family. PdxB subfamily. In terms of assembly, homodimer.

It localises to the cytoplasm. The enzyme catalyses 4-phospho-D-erythronate + NAD(+) = (R)-3-hydroxy-2-oxo-4-phosphooxybutanoate + NADH + H(+). It participates in cofactor biosynthesis; pyridoxine 5'-phosphate biosynthesis; pyridoxine 5'-phosphate from D-erythrose 4-phosphate: step 2/5. Its function is as follows. Catalyzes the oxidation of erythronate-4-phosphate to 3-hydroxy-2-oxo-4-phosphonooxybutanoate. This is Erythronate-4-phosphate dehydrogenase from Salinibacter ruber (strain DSM 13855 / M31).